A 104-amino-acid chain; its full sequence is Phosphoribosyl-ATP pyrophosphatase (104 aa).

The protein belongs to the PRA-PH family.

The protein localises to the cytoplasm. The catalysed reaction is 1-(5-phospho-beta-D-ribosyl)-ATP + H2O = 1-(5-phospho-beta-D-ribosyl)-5'-AMP + diphosphate + H(+). It participates in amino-acid biosynthesis; L-histidine biosynthesis; L-histidine from 5-phospho-alpha-D-ribose 1-diphosphate: step 2/9. This chain is Phosphoribosyl-ATP pyrophosphatase, found in Methanosarcina barkeri (strain Fusaro / DSM 804).